Here is a 157-residue protein sequence, read N- to C-terminus: Endoribonuclease YbeY (157 aa).

Zn(2+) contacts are provided by His121, His125, and His131.

This sequence belongs to the endoribonuclease YbeY family. Zn(2+) is required as a cofactor.

It is found in the cytoplasm. Single strand-specific metallo-endoribonuclease involved in late-stage 70S ribosome quality control and in maturation of the 3' terminus of the 16S rRNA. The sequence is that of Endoribonuclease YbeY from Salinispora tropica (strain ATCC BAA-916 / DSM 44818 / JCM 13857 / NBRC 105044 / CNB-440).